The chain runs to 434 residues: E3 ubiquitin-protein ligase siah-1 (434 aa).

The disordered stretch occupies residues 27 to 88; the sequence is FEEDENAGPE…NGNTPSVTIP (62 aa). The segment covering 43 to 55 has biased composition (low complexity); sequence SSSSASSQRSSAS. Residues 74–88 show a composition bias toward polar residues; the sequence is MSNNQNGNTPSVTIP. The RING-type; degenerate zinc finger occupies 171 to 206; that stretch reads CPVCLEYMLPPYMQCPSGHLVCSNCRPKLQCCPTCR. Positions 220–415 are SBD; it reads IANTVRFPCK…LGINVTISRI (196 aa). The segment at 223–283 adopts an SIAH-type; degenerate zinc-finger fold; that stretch reads TVRFPCKFSN…VMDHLKKVHK (61 aa). Zn(2+)-binding residues include cysteine 228, cysteine 235, histidine 247, cysteine 251, cysteine 258, cysteine 265, histidine 277, and histidine 282.

The protein belongs to the SINA (Seven in absentia) family. In terms of assembly, interacts with tir-1.

It catalyses the reaction S-ubiquitinyl-[E2 ubiquitin-conjugating enzyme]-L-cysteine + [acceptor protein]-L-lysine = [E2 ubiquitin-conjugating enzyme]-L-cysteine + N(6)-ubiquitinyl-[acceptor protein]-L-lysine.. Its pathway is protein modification; protein ubiquitination. Its function is as follows. E3 ubiquitin-protein ligase that mediates ubiquitination and subsequent proteasomal degradation of target proteins. E3 ubiquitin ligases accept ubiquitin from an E2 ubiquitin-conjugating enzyme in the form of a thioester and then directly transfers the ubiquitin to targeted substrates. It probably triggers the ubiquitin-mediated degradation of different substrates. The sequence is that of E3 ubiquitin-protein ligase siah-1 from Caenorhabditis briggsae.